We begin with the raw amino-acid sequence, 81 residues long: U-poneritoxin(01)-Om6a (81 aa).

Positions 1 to 21 (MRRSYVLLAFAIVLIISIISA) are cleaved as a signal peptide. Residues 22–43 (QVEADASSDAFADAVADAVADP) constitute a propeptide that is removed on maturation. Residue Ala-79 is modified to Alanine amide.

The protein belongs to the formicidae venom precursor-01 superfamily. Post-translationally, truncated sequences of this peptide have also been found in the venom. It is possible they have been cleaved in the venom. As to expression, expressed by the venom gland.

It localises to the secreted. Functionally, cationic amphipathic alpha-helical peptide with antimicrobial activities against E.coli (MIC=3.1), and S.aureus (MIC=3.1 uM). Also shows histamine-releasing activity (33.6% at 10 uM). Does not have activity against S.cerevisiae. Does not show hemolytic activity, even at 50 uM. This Odontomachus monticola (Trap-jaw ant) protein is U-poneritoxin(01)-Om6a.